The primary structure comprises 177 residues: Large ribosomal subunit protein uL6 (177 aa).

It belongs to the universal ribosomal protein uL6 family. Part of the 50S ribosomal subunit.

In terms of biological role, this protein binds to the 23S rRNA, and is important in its secondary structure. It is located near the subunit interface in the base of the L7/L12 stalk, and near the tRNA binding site of the peptidyltransferase center. The polypeptide is Large ribosomal subunit protein uL6 (Pseudomonas syringae pv. tomato (strain ATCC BAA-871 / DC3000)).